The following is a 422-amino-acid chain: Probable D-serine dehydratase (422 aa).

N6-(pyridoxal phosphate)lysine is present on Lys105.

This sequence belongs to the serine/threonine dehydratase family. DsdA subfamily. Pyridoxal 5'-phosphate serves as cofactor.

The catalysed reaction is D-serine = pyruvate + NH4(+). This chain is Probable D-serine dehydratase, found in Carboxydothermus hydrogenoformans (strain ATCC BAA-161 / DSM 6008 / Z-2901).